We begin with the raw amino-acid sequence, 227 residues long: Phosphoglycolate phosphatase (227 aa).

The active-site Nucleophile is aspartate 11. Residues aspartate 11, aspartate 13, and aspartate 176 each coordinate Mg(2+).

It belongs to the HAD-like hydrolase superfamily. CbbY/CbbZ/Gph/YieH family. It depends on Mg(2+) as a cofactor.

It carries out the reaction 2-phosphoglycolate + H2O = glycolate + phosphate. Its pathway is organic acid metabolism; glycolate biosynthesis; glycolate from 2-phosphoglycolate: step 1/1. In terms of biological role, specifically catalyzes the dephosphorylation of 2-phosphoglycolate. Is involved in the dissimilation of the intracellular 2-phosphoglycolate formed during the DNA repair of 3'-phosphoglycolate ends, a major class of DNA lesions induced by oxidative stress. The protein is Phosphoglycolate phosphatase of Aliivibrio fischeri (strain ATCC 700601 / ES114) (Vibrio fischeri).